The sequence spans 551 residues: MSNYAPFIKPYVEYNEHGWGPCEVPELDVPYQPFCKGDRLGKICDWTVSLPEKKFPSKYASTFGNSSQYAYFYEDDDSTFHLVDTTGSKAFKPYQRGRYRPNVRNNVRARGRTGRGNATLGGLGGPVAGGSTANSTKYGKGRNTRNAQNMGRRFGRNAPTRLRESSVMVQSDWVSIEEIDFPRLLKLALPNIKEGKDIATCGSLEYYDKLYDRVNLRNEKPLLKMDRVVHTVTTTDDPVIRRLSKTMGNVFATDEILATIMCCTRSNYSWDVVIEKLGTKVFLDKRDNDQFDLLTVNETSLEPPMDEEGSINSAHSLAMEATLINHNFSQQVLRIGDQEPRFKFEEPNPFEEQGVDLASMGYRYRQWDLGNEVVLIARCKHNGVVQGPNGDMQFLSIKALNEWDSKVTNSVEWRQKLDTQRGAVLASELRNNACKLARWTVEAVLAGSDQLKLGYVSRVNPRDHLRHVILGTQQFKPQEFATQINLNMDNAWGVLRCLIDIVMKQPDGKYLIMKDPNKSMIRLYDIPENAFDSDGDDESESSEPFGNSIDN.

Residues 108-152 (RARGRTGRGNATLGGLGGPVAGGSTANSTKYGKGRNTRNAQNMGR) form a disordered region. The segment covering 119–128 (TLGGLGGPVA) has biased composition (gly residues). The tract at residues 290–304 (QFDLLTVNETSLEPP) is RNA gate. Positions 530–551 (AFDSDGDDESESSEPFGNSIDN) are disordered. A compositionally biased stretch (acidic residues) spans 531 to 541 (FDSDGDDESES).

This sequence belongs to the eIF-3 subunit D family. In terms of assembly, component of the eukaryotic translation initiation factor 3 (eIF-3) complex. The eIF-3 complex interacts with pix.

It localises to the cytoplasm. Functionally, mRNA cap-binding component of the eukaryotic translation initiation factor 3 (eIF-3) complex, which is involved in protein synthesis of a specialized repertoire of mRNAs and, together with other initiation factors, stimulates binding of mRNA and methionyl-tRNAi to the 40S ribosome. The eIF-3 complex specifically targets and initiates translation of a subset of mRNAs involved in cell proliferation. In the eIF-3 complex, eif3d specifically recognizes and binds the 7-methylguanosine cap of a subset of mRNAs. The polypeptide is Eukaryotic translation initiation factor 3 subunit D-2 (Drosophila yakuba (Fruit fly)).